A 321-amino-acid polypeptide reads, in one-letter code: Replication factor C small subunit (321 aa).

Residue 43–50 (GFAGVGKT) participates in ATP binding.

It belongs to the activator 1 small subunits family. RfcS subfamily. Heteromultimer composed of small subunits (RfcS) and large subunits (RfcL).

In terms of biological role, part of the RFC clamp loader complex which loads the PCNA sliding clamp onto DNA. This Methanosphaera stadtmanae (strain ATCC 43021 / DSM 3091 / JCM 11832 / MCB-3) protein is Replication factor C small subunit.